Reading from the N-terminus, the 116-residue chain is Ribosome-binding factor A (116 aa).

The protein belongs to the RbfA family. Monomer. Binds 30S ribosomal subunits, but not 50S ribosomal subunits or 70S ribosomes.

It localises to the cytoplasm. One of several proteins that assist in the late maturation steps of the functional core of the 30S ribosomal subunit. Associates with free 30S ribosomal subunits (but not with 30S subunits that are part of 70S ribosomes or polysomes). Required for efficient processing of 16S rRNA. May interact with the 5'-terminal helix region of 16S rRNA. The chain is Ribosome-binding factor A from Clostridium perfringens (strain 13 / Type A).